Here is a 204-residue protein sequence, read N- to C-terminus: Tat proofreading chaperone DmsD (204 aa).

The protein belongs to the TorD/DmsD family. DmsD subfamily.

Functionally, required for biogenesis/assembly of DMSO reductase, but not for the interaction of the DmsA signal peptide with the Tat system. May be part of a chaperone cascade complex that facilitates a folding-maturation pathway for the substrate protein. This chain is Tat proofreading chaperone DmsD, found in Salmonella typhi.